The sequence spans 48 residues: Protein TUNAR (48 aa).

Positions 1–20 (MVITSENDEDRGGQEKESKE) are disordered. The segment covering 10–20 (DRGGQEKESKE) has biased composition (basic and acidic residues). A helical membrane pass occupies residues 24–44 (LAMLGIIGTILNLIVIIFVYI).

Interacts with ATPase ATP2A2/SERCA2. Interacts with ATPase ATP2A3/SERCA3; the interaction occurs at low levels in low glucose conditions and is increased by high glucose levels. As to expression, highly expressed in pancreatic islets where it is enriched in the insulin-producing beta cells.

It is found in the endoplasmic reticulum membrane. The protein localises to the extracellular vesicle membrane. In terms of biological role, in neurons, plays a role in the regulation of intracellular Ca(2+), possibly by acting as an activator of ATP2A2/SERCA2, thus increasing the efficiency with which Ca(2+) is removed from the cytoplasm. Inhibits differentiation of embryonic stem cells into neurons and inhibits neurite outgrowth, likely as a result of its role in intracellular Ca(2+) regulation. In pancreatic beta cells, lowers Ca(2+) levels in the endoplasmic reticulum and enhances glucose-stimulated insulin secretion. The polypeptide is Protein TUNAR (Homo sapiens (Human)).